The following is a 248-amino-acid chain: Isoprenyl transferase (248 aa).

The active site involves aspartate 28. Aspartate 28 lines the Mg(2+) pocket. Substrate contacts are provided by residues 29-32, tryptophan 33, arginine 41, histidine 45, and 73-75; these read GNGR and SSE. The active-site Proton acceptor is asparagine 76. Substrate-binding positions include tryptophan 77, arginine 79, arginine 196, and 202–204; that span reads RLS. Glutamate 215 is a Mg(2+) binding site.

Belongs to the UPP synthase family. Homodimer. Mg(2+) is required as a cofactor.

Catalyzes the condensation of isopentenyl diphosphate (IPP) with allylic pyrophosphates generating different type of terpenoids. In Zymomonas mobilis subsp. mobilis (strain ATCC 31821 / ZM4 / CP4), this protein is Isoprenyl transferase.